Consider the following 137-residue polypeptide: Transcription antitermination protein NusB (137 aa).

The protein belongs to the NusB family.

Its function is as follows. Involved in transcription antitermination. Required for transcription of ribosomal RNA (rRNA) genes. Binds specifically to the boxA antiterminator sequence of the ribosomal RNA (rrn) operons. This Finegoldia magna (strain ATCC 29328 / DSM 20472 / WAL 2508) (Peptostreptococcus magnus) protein is Transcription antitermination protein NusB.